Here is a 323-residue protein sequence, read N- to C-terminus: Serine/threonine-protein phosphatase PP1 (323 aa).

Mn(2+) contacts are provided by Asp-63, His-65, Asp-91, and Asn-123. The active-site Proton donor is His-124. Positions 172 and 247 each coordinate Mn(2+).

The protein belongs to the PPP phosphatase family. PP-1 subfamily. Requires Mn(2+) as cofactor.

It carries out the reaction O-phospho-L-seryl-[protein] + H2O = L-seryl-[protein] + phosphate. The enzyme catalyses O-phospho-L-threonyl-[protein] + H2O = L-threonyl-[protein] + phosphate. Plays an important role in the control of mitosis by reversing the action of the nimA kinase. The chain is Serine/threonine-protein phosphatase PP1 (bimG) from Emericella nidulans (strain FGSC A4 / ATCC 38163 / CBS 112.46 / NRRL 194 / M139) (Aspergillus nidulans).